The following is a 236-amino-acid chain: UPF0502 protein BceJ2315_62050 (236 aa).

It belongs to the UPF0502 family.

The chain is UPF0502 protein BceJ2315_62050 from Burkholderia cenocepacia (strain ATCC BAA-245 / DSM 16553 / LMG 16656 / NCTC 13227 / J2315 / CF5610) (Burkholderia cepacia (strain J2315)).